Here is a 1915-residue protein sequence, read N- to C-terminus: METQPASVPCVLPQDVYEFSEDRESLGRLRVSEMPSELNGGGDGSKGDGAAVVATEVSQQSNKKRKRCGVCVPCLRKEPCGTCYNCVNRSTSHQICKMRKCEQLKKKRVVPMKGVEAVDKDDAKNQAKEQVPSVKNCSESILVDGPKTDQMEAGPVNHVQEGRLKQECDSTLPSKGSEDLANQLLMEANSWLSNTAAPQDPCNKLNWDKPIIPNHIAANNNSNLEDAKNLVAFSAVAEAMSNYGMPASGTPSSISMQLYEKFNYETNQDNSGHSEGNAPSCPEDLNTLKEALALAKHGVKPPNCNCDGPECPDYLEWLENKIKSTGKGSQESPFPSLGQVSKKLVQKSYHKEQVLNLENTNVTCPSGNLPFSQNALSLAKEKNISLQTAIAIEALTQLSSALPQTNNEYPNAPSQPLINHNDQLTHFPTAKGNQLPMLPLSCNELFQNQQAQLYTGKNALPVPQSPRQASWEQNKKPGYQESEYIPENLSQSSSVLPSDASTPQKKEFLQQWVQNADLLKSPSDPMTGLKQLLGNTDEYIKSAFKGPEGLSKKIKNVKSKHTIKSIKKESADFTKMSPDQQLSQLLQGNDFHRNTQAALQQHLHHKRNLFVDSNTMEACTQEQQNWWVPNSQQAPVSKTTEKPVKERKKRRQSPSQKQVEPKPKPPRKQVQIKKPRVKEGNAVFMPVSQISLDSFRRVEKEENQVKELDLENSLPINVQPDLLGSQSIQLTGSQANLENQKTVNTQETCNENQTSIGKANNFALCVNKTNSLVAKGRCPTPSTGDSSSGQGDSANQHTNLTDVPGQNDLSCIDDKFEDLIKQFAAEFGEDFSLPGSEVPSQNGERPPKQQTSGVPQFKMPFPSQLPSENATHSNPALSNNLLTHNASHKFDSLFSSKSPKQIKIESSGAITVVSTTCSYSEENQHLDGTPTKSELPFNPTLSGFLESPLKYLTSPTKSLIDTPAKMAQAEFPTCDCVEQINEKDEGPYYTHLGSGPTVASIRELMEERFGEKGEAIRIEKVIYTGKEGKSSRGCPIAKWVIRRQSEDEKLMCLVRQRAGHHCENAVIIILIMAWEGIPRALGDSLYDDISGTITKYGNPTSRRCGLNDDRTCACQGKDPNTCGASFSFGCSWSMYFNGCKYARSKTPRKFRLIGDNPKEEEFLKDSFQDLATKVAPVYKMLAPQAYQNQANNEDVAIDCRLGLEEGRPFSGVTACMDFCAHAHKDQHNLYNGCTVVCTLTKEDNRMIGKIAEDEQLHVLPLYKVSTTDEFGSEERQLEKIRKGGIQVLSSFPREVRKLSEPAKSCRQRQLDAKKATAEKKKLQKEKLVSPDKTKQEPSDTKTCQQNPGVPQQQTKPCVKVEPSNHYNTFKYNGNGVVESYSVLGSCRPSDPYSMNSVYSYHSFYAQPNLPSVNGFHSKFALPPFGFYSFPNNPVVPNQFMNYGTGDARNSGWMNNSFEKKPELQSLADGMNQSYGSELPEQNYRRSSEVPHHYSLQNSNSQKSVGVPHRTTPAPMETTPYSNVPCYNKVIKKEPVCDPLVDPFQRSNSVHSQSPGVNHSLQTNDLSYKANGALPSSGRTNKEGPCSMFLPSDKNGLEKRDYFGVHSNVPGLKEKQWTPYGIDVPVGQRDSLDSQCSGKVWSSCKLSDSPAVMPSTVQDKNWTGRQASLNQGVKEPMPFQEKLWNSVAASGRCSTTPNDRSSVTPCAELQDKNWMSFPNPAVNSLKTDSSQNHWDPYSLDDNMDDGQSKSVKEEEDEEEIWSDSEHNFLDGNIGGVAVAPGHGSILIECARRELHATTPLKKPNRCHPTRISLVFYQHKNLNQPNHGLALWEAKMKQLAERARVKEEEAAKLGIKQEVKSLGKKRKWGGAATTETPPVEKKDFIPTRQAATSLTDSTTTAFSYAYTKVTGPYSRFI.

The interval 28–49 (RLRVSEMPSELNGGGDGSKGDG) is disordered. The CXXC-type zinc-finger motif lies at 61–102 (SNKKRKRCGVCVPCLRKEPCGTCYNCVNRSTSHQICKMRKCE). Zn(2+)-binding residues include Cys68, Cys71, Cys74, Cys80, Cys83, Cys86, Cys96, and Cys101. A compositionally biased stretch (polar residues) spans 629 to 638 (PNSQQAPVSK). 3 disordered regions span residues 629–679 (PNSQ…RVKE), 776–806 (GRCP…VPGQ), and 831–880 (FSLP…LSNN). The segment covering 664-676 (KPPRKQVQIKKPR) has biased composition (basic residues). Positions 779–793 (PTPSTGDSSSGQGDS) are enriched in low complexity. Polar residues-rich tracts occupy residues 838-854 (VPSQ…TSGV) and 864-880 (QLPS…LSNN). Cys974, Cys976, Cys1034, His1060, and Cys1062 together coordinate Zn(2+). Arg1102 provides a ligand contact to 2-oxoglutarate. 5 residues coordinate Zn(2+): Cys1112, Cys1114, Cys1130, Cys1139, and Cys1199. Residue Cys1215 coordinates 2-oxoglutarate. His1221 serves as a coordination point for Zn(2+). The Fe cation site is built by His1223 and Asp1225. His1257 serves as a coordination point for 2-oxoglutarate. Disordered stretches follow at residues 1298–1356 (LSEP…QTKP), 1469–1516 (GMNQ…APME), and 1719–1753 (PAVN…VKEE). Basic and acidic residues predominate over residues 1308–1339 (RQLDAKKATAEKKKLQKEKLVSPDKTKQEPSD). Over residues 1340-1355 (TKTCQQNPGVPQQQTK) the composition is skewed to polar residues. Over residues 1482-1491 (NYRRSSEVPH) the composition is skewed to basic and acidic residues. Composition is skewed to polar residues over residues 1494–1503 (SLQNSNSQKS) and 1720–1732 (AVNS…SQNH). His1794 provides a ligand contact to Fe cation. Residue 1809–1811 (RIS) coordinates 2-oxoglutarate. A coiled-coil region spans residues 1827 to 1860 (LALWEAKMKQLAERARVKEEEAAKLGIKQEVKSL).

This sequence belongs to the TET family. Requires Fe(2+) as cofactor. It depends on Zn(2+) as a cofactor. In terms of tissue distribution, detected in embryo (at protein level). Detected in embryonic head, in developing brain and eye.

It is found in the nucleus. It localises to the chromosome. The enzyme catalyses a 5-methyl-2'-deoxycytidine in DNA + 2-oxoglutarate + O2 = a 5-hydroxymethyl-2'-deoxycytidine in DNA + succinate + CO2. The catalysed reaction is a 5-hydroxymethyl-2'-deoxycytidine in DNA + 2-oxoglutarate + O2 = a 5-formyl-2'-deoxycytidine in DNA + succinate + CO2 + H2O. It catalyses the reaction a 5-formyl-2'-deoxycytidine in DNA + 2-oxoglutarate + O2 = a 5-carboxyl-2'-deoxycytidine in DNA + succinate + CO2 + H(+). Its function is as follows. Dioxygenase that catalyzes the conversion of the modified genomic base 5-methylcytosine (5mC) into 5-hydroxymethylcytosine (5hmC) and plays a key role in epigenetic chromatin reprogramming during embryonic development. Conversion of 5mC into 5hmC probably constitutes the first step in cytosine demethylation. Selectively binds to the promoter region of target genes and contributes to regulate the expression of numerous developmental genes, including pax6, rax, sox9 and six3. May also contribute to the regulation of target genes in ways that do not require its enzyme activity. The chain is Methylcytosine dioxygenase tet3-B from Xenopus laevis (African clawed frog).